The chain runs to 188 residues: Acireductone dioxygenase (188 aa).

4 residues coordinate Fe(2+): His97, His99, Glu103, and His141. His97, His99, Glu103, and His141 together coordinate Ni(2+).

Belongs to the acireductone dioxygenase (ARD) family. As to quaternary structure, monomer. Fe(2+) is required as a cofactor. The cofactor is Ni(2+).

It carries out the reaction 1,2-dihydroxy-5-(methylsulfanyl)pent-1-en-3-one + O2 = 3-(methylsulfanyl)propanoate + CO + formate + 2 H(+). The enzyme catalyses 1,2-dihydroxy-5-(methylsulfanyl)pent-1-en-3-one + O2 = 4-methylsulfanyl-2-oxobutanoate + formate + 2 H(+). Its pathway is amino-acid biosynthesis; L-methionine biosynthesis via salvage pathway; L-methionine from S-methyl-5-thio-alpha-D-ribose 1-phosphate: step 5/6. Functionally, catalyzes 2 different reactions between oxygen and the acireductone 1,2-dihydroxy-3-keto-5-methylthiopentene (DHK-MTPene) depending upon the metal bound in the active site. Fe-containing acireductone dioxygenase (Fe-ARD) produces formate and 2-keto-4-methylthiobutyrate (KMTB), the alpha-ketoacid precursor of methionine in the methionine recycle pathway. Ni-containing acireductone dioxygenase (Ni-ARD) produces methylthiopropionate, carbon monoxide and formate, and does not lie on the methionine recycle pathway. The sequence is that of Acireductone dioxygenase from Xanthomonas oryzae pv. oryzae (strain MAFF 311018).